We begin with the raw amino-acid sequence, 207 residues long: Small ribosomal subunit protein uS4 (207 aa).

Residues 97–160 (SRLDNVVYRM…KKQARIVEAL (64 aa)) form the S4 RNA-binding domain.

It belongs to the universal ribosomal protein uS4 family. As to quaternary structure, part of the 30S ribosomal subunit. Contacts protein S5. The interaction surface between S4 and S5 is involved in control of translational fidelity.

Its function is as follows. One of the primary rRNA binding proteins, it binds directly to 16S rRNA where it nucleates assembly of the body of the 30S subunit. In terms of biological role, with S5 and S12 plays an important role in translational accuracy. This chain is Small ribosomal subunit protein uS4, found in Burkholderia pseudomallei (strain 1106a).